The sequence spans 482 residues: tRNA sulfurtransferase (482 aa).

The THUMP domain maps to 61 to 165; the sequence is AQYLETLACI…NDELYIISAV (105 aa). Residues 183–184, Lys265, Gly287, and Gln296 each bind ATP; that span reads LL. A disulfide bridge connects residues Cys344 and Cys456. The 79-residue stretch at 404-482 folds into the Rhodanese domain; the sequence is LAADEVILDI…GFDNVKVYRP (79 aa). The active-site Cysteine persulfide intermediate is Cys456.

The protein belongs to the ThiI family.

The protein resides in the cytoplasm. It carries out the reaction [ThiI sulfur-carrier protein]-S-sulfanyl-L-cysteine + a uridine in tRNA + 2 reduced [2Fe-2S]-[ferredoxin] + ATP + H(+) = [ThiI sulfur-carrier protein]-L-cysteine + a 4-thiouridine in tRNA + 2 oxidized [2Fe-2S]-[ferredoxin] + AMP + diphosphate. The enzyme catalyses [ThiS sulfur-carrier protein]-C-terminal Gly-Gly-AMP + S-sulfanyl-L-cysteinyl-[cysteine desulfurase] + AH2 = [ThiS sulfur-carrier protein]-C-terminal-Gly-aminoethanethioate + L-cysteinyl-[cysteine desulfurase] + A + AMP + 2 H(+). The protein operates within cofactor biosynthesis; thiamine diphosphate biosynthesis. Catalyzes the ATP-dependent transfer of a sulfur to tRNA to produce 4-thiouridine in position 8 of tRNAs, which functions as a near-UV photosensor. Also catalyzes the transfer of sulfur to the sulfur carrier protein ThiS, forming ThiS-thiocarboxylate. This is a step in the synthesis of thiazole, in the thiamine biosynthesis pathway. The sulfur is donated as persulfide by IscS. The protein is tRNA sulfurtransferase of Aeromonas salmonicida (strain A449).